A 621-amino-acid polypeptide reads, in one-letter code: F-box/LRR-repeat protein 4 (621 aa).

Asymmetric dimethylarginine is present on R28. Residues 277–332 form the F-box domain; the sequence is NGYFDKLPYELIQLILNHLSLPDLCRLAQTCRLLHQHCCDPLQYIHLNLQPYWARL. LRR repeat units lie at residues 376 to 397, 402 to 421, 427 to 448, 452 to 474, 480 to 501, 504 to 524, 532 to 558, 559 to 583, and 584 to 609; these read ELVR…EVIS, NLQD…AFGH, SLKR…SILN, ELQH…ASMI, NLRT…AELA, CVLL…STGC, LPNL…ASNC, TRLQ…LLES, and CKDL…LNAS.

Part of a SCF (SKP1-CUL1-F-box) protein ligase complex. Interacts with FAF2 and VCP. Interacts with PPTC7; this interaction promotes destruction of BNIP3 and NIX and mitophagy suppression.

It localises to the cytoplasm. Its subcellular location is the nucleus. The protein localises to the mitochondrion outer membrane. Substrate-recognition component of the mitochondria-localized SCF-FBXL4 ubiquitin E3 ligase complex that plays a role in the restriction of mitophagy by controlling the degradation of BNIP3 and NIX mitophagy receptors. Also rescues mitochondrial injury through reverting hyperactivation of DRP1-mediated mitochondrial fission. In Mus musculus (Mouse), this protein is F-box/LRR-repeat protein 4 (Fbxl4).